Consider the following 91-residue polypeptide: Small ribosomal subunit protein bS18 (91 aa).

Residues 1 to 21 (MSDERAPQRSTGPRKKRPFQR) form a disordered region. Residues 12–21 (GPRKKRPFQR) are compositionally biased toward basic residues.

This sequence belongs to the bacterial ribosomal protein bS18 family. Part of the 30S ribosomal subunit. Forms a tight heterodimer with protein bS6.

Functionally, binds as a heterodimer with protein bS6 to the central domain of the 16S rRNA, where it helps stabilize the platform of the 30S subunit. The chain is Small ribosomal subunit protein bS18 from Geotalea daltonii (strain DSM 22248 / JCM 15807 / FRC-32) (Geobacter daltonii).